Consider the following 150-residue polypeptide: Large ribosomal subunit protein bL9 (150 aa).

The protein belongs to the bacterial ribosomal protein bL9 family.

Binds to the 23S rRNA. This Erwinia tasmaniensis (strain DSM 17950 / CFBP 7177 / CIP 109463 / NCPPB 4357 / Et1/99) protein is Large ribosomal subunit protein bL9.